The chain runs to 440 residues: C4-dicarboxylate transport protein (440 aa).

9 consecutive transmembrane segments (helical) span residues 15 to 35 (VLVA…TGVA), 46 to 66 (LIKM…IAGM), 78 to 98 (YALL…LVVV), 146 to 166 (AFAN…GFAL), 190 to 210 (IINM…AFTI), 224 to 244 (LMAC…GGIC), 291 to 311 (VVGL…SIYL), 332 to 352 (ITLL…TGSG), and 354 to 374 (IVLA…LALI). The disordered stretch occupies residues 419 to 440 (GGSPLVDTRPTDDLGVAEGPAR).

The protein belongs to the dicarboxylate/amino acid:cation symporter (DAACS) (TC 2.A.23) family.

It localises to the cell inner membrane. Responsible for the transport of dicarboxylates such as succinate, fumarate, and malate from the periplasm across the membrane. The sequence is that of C4-dicarboxylate transport protein from Pseudomonas entomophila (strain L48).